We begin with the raw amino-acid sequence, 66 residues long: Beta-toxin Ct71 (66 aa).

Positions 1–66 constitute an LCN-type CS-alpha/beta domain; that stretch reads KEGYIVNYHD…VWPLPKKTCN (66 aa). 4 disulfides stabilise this stretch: C12–C65, C16–C41, C25–C46, and C29–C48. The residue at position 66 (N66) is an Asparagine amide.

The protein belongs to the long (4 C-C) scorpion toxin superfamily. Sodium channel inhibitor family. Beta subfamily. In terms of tissue distribution, expressed by the venom gland.

Its subcellular location is the secreted. Its function is as follows. Beta toxins bind voltage-independently at site-4 of sodium channels (Nav) and shift the voltage of activation toward more negative potentials thereby affecting sodium channel activation and promoting spontaneous and repetitive firing. Lethal to mice. This Centruroides tecomanus (Scorpion) protein is Beta-toxin Ct71.